The sequence spans 430 residues: MKTTINQVYKHTGEEVMIGAWVANKRSSGKIAFLQLRDGTGFIQGVVVKAEVEEDIFQIAKSVTQETSLYVKGIVKEDERSPLGYELAVTSIEVIHEATDYPITPKEHGTEFLMDHRHLWLRSKRQHAIMKIRNEIIRATYEFFNKEGFVKVDPPILTGSAPEGTTELFATKYFDEDAFLSQSGQLYMEAAAMALGKVFSFGPTFRAEKSKTKRHLIEFWMIEPEMAFVEFEENLEVQENYVAYIVQSVLEHCKIELNTLGRDTSKLEQIKAPFPRITYDKAIEFLKEKGFDDIEWGDDFGAPHETAIAESYDKPVFITHYPTSLKPFYMQPAKDRDDVVLCADLIAPEGYGEIIGGSERVHDMDLLEERLKEHGLDSDAYKWYAELRQYGSVPHSGFGLGLERTVAWISGAPHVRETIPFPRLLNRLYP.

Belongs to the class-II aminoacyl-tRNA synthetase family. Homodimer.

The protein resides in the cytoplasm. The enzyme catalyses tRNA(Asn) + L-asparagine + ATP = L-asparaginyl-tRNA(Asn) + AMP + diphosphate + H(+). This Bacillus velezensis (strain DSM 23117 / BGSC 10A6 / LMG 26770 / FZB42) (Bacillus amyloliquefaciens subsp. plantarum) protein is Asparagine--tRNA ligase.